Here is a 146-residue protein sequence, read N- to C-terminus: Nitric oxide reductase subunit C (146 aa).

Residues 13–29 (IYFGGSVFFILLFLALT) form a helical; Signal-anchor membrane-spanning segment. Heme c is bound by residues Cys-61, Cys-64, and His-65.

In terms of assembly, heterodimer of cytochromes b (large subunit) and c (small subunit).

It localises to the cell membrane. Component of the anaerobic respiratory chain that transforms nitrate to dinitrogen (denitrification). The polypeptide is Nitric oxide reductase subunit C (norC) (Pseudomonas aeruginosa (strain ATCC 15692 / DSM 22644 / CIP 104116 / JCM 14847 / LMG 12228 / 1C / PRS 101 / PAO1)).